A 285-amino-acid polypeptide reads, in one-letter code: Phasyl DNA replicon protein arp (285 aa).

In terms of biological role, essential for autonomous replication of the phasyl DNA replicon. This chain is Phasyl DNA replicon protein arp (arp), found in Escherichia coli.